The following is a 237-amino-acid chain: DNA repair protein RecO (237 aa).

The protein belongs to the RecO family.

Functionally, involved in DNA repair and RecF pathway recombination. The sequence is that of DNA repair protein RecO from Rickettsia akari (strain Hartford).